The chain runs to 433 residues: N-lysine methyltransferase SMYD2 (433 aa).

Residues 7-241 (GGLERFCSAG…PGDEVFTSYI (235 aa)) enclose the SET domain. 17–19 (KGR) is a binding site for S-adenosyl-L-methionine. Cys-52, Cys-55, Cys-65, Cys-68, Cys-74, Cys-78, His-86, and Cys-90 together coordinate Zn(2+). The MYND-type zinc-finger motif lies at 52–90 (CECCFARKEGLSKCGRCKQAFYCDVECQKEDWPLHKLEC). Residues His-137, 206–207 (NH), and 258–260 (YFF) contribute to the S-adenosyl-L-methionine site. Ser-283 is modified (phosphoserine).

This sequence belongs to the class V-like SAM-binding methyltransferase superfamily. Interacts with RNA polymerase II and HELZ. Interacts with SIN3A and HDAC1. Interacts (via MYND-type zinc finger) with EPB41L3. Interacts (via SET domain) with p53/TP53. Interacts with RB1 and HSP90AA1.

The protein localises to the cytoplasm. It is found in the cytosol. The protein resides in the nucleus. It carries out the reaction L-lysyl(4)-[histone H3] + 3 S-adenosyl-L-methionine = N(6),N(6),N(6)-trimethyl-L-lysyl(4)-[histone H3] + 3 S-adenosyl-L-homocysteine + 3 H(+). It catalyses the reaction L-lysyl-[protein] + S-adenosyl-L-methionine = N(6)-methyl-L-lysyl-[protein] + S-adenosyl-L-homocysteine + H(+). Functionally, protein-lysine N-methyltransferase that methylates both histones and non-histone proteins, including p53/TP53 and RB1. Specifically trimethylates histone H3 'Lys-4' (H3K4me3) in vivo. The activity requires interaction with HSP90alpha. Shows even higher methyltransferase activity on p53/TP53. Monomethylates 'Lys-370' of p53/TP53, leading to decreased DNA-binding activity and subsequent transcriptional regulation activity of p53/TP53. Monomethylates RB1 at 'Lys-860'. The chain is N-lysine methyltransferase SMYD2 (Smyd2) from Rattus norvegicus (Rat).